The sequence spans 369 residues: Bi-functional coumaroyl CoA and feruloyl CoA ortho-hydroxylase Diox2 (369 aa).

A Fe2OG dioxygenase domain is found at 215–318; that stretch reads GSRRVNLNYY…RISVPLFVNP (104 aa). Tyrosine 224 contacts 2-oxoglutarate. 3 residues coordinate Fe cation: histidine 239, aspartate 241, and histidine 299. Residues arginine 309 and serine 311 each contribute to the 2-oxoglutarate site.

This sequence belongs to the iron/ascorbate-dependent oxidoreductase family. The cofactor is L-ascorbate. Requires Fe(2+) as cofactor.

It carries out the reaction (E)-4-coumaroyl-CoA + 2-oxoglutarate + O2 = (E)-2,4-dihydroxycinnamoyl-CoA + succinate + CO2. The catalysed reaction is (E)-feruloyl-CoA + 2-oxoglutarate + O2 = (E)-6-hydroxyferuloyl-CoA + succinate + CO2. It functions in the pathway phenylpropanoid metabolism. 2-oxoglutarate (OG)- and Fe(II)-dependent dioxygenase (2OGD) involved in scopoletin and umbelliferone biosynthesis. Converts feruloyl CoA into 6'-hydroxyferuloyl CoA, and p-coumaroyl CoA into 2,4-dihydroxycinnamoyl-CoA. In Ruta graveolens (Common rue), this protein is Bi-functional coumaroyl CoA and feruloyl CoA ortho-hydroxylase Diox2.